We begin with the raw amino-acid sequence, 932 residues long: Transcriptional regulatory protein DagR (932 aa).

The region spanning 111–343 (LIGYDRSLRD…LKSDIQFLCA (233 aa)) is the Sigma-54 factor interaction domain. ATP is bound by residues 141-148 (GPSGVGKT) and 210-219 (ADGGYLLLDE). Residues 462–567 (RYGDQIEERV…KECRHYRQRI (106 aa)) form the PRD 1 domain. His497 is subject to Phosphohistidine. In terms of domain architecture, PTS EIIA type-4 spans 572–708 (DCGVILIAHG…PQQENGGKVL (137 aa)). His580 (tele-phosphohistidine intermediate) is an active-site residue. The region spanning 835–932 (LNPQRILKEM…YFYIYELLYS (98 aa)) is the PRD 2 domain. A Phosphohistidine modification is found at His870.

In terms of biological role, involved in the regulation of the catabolism of D-glucosaminate. This Salmonella typhimurium (strain 14028s / SGSC 2262) protein is Transcriptional regulatory protein DagR (dgaR).